Here is a 65-residue protein sequence, read N- to C-terminus: Large ribosomal subunit protein bL33c (65 aa).

It belongs to the bacterial ribosomal protein bL33 family.

It is found in the plastid. The protein resides in the chloroplast. The chain is Large ribosomal subunit protein bL33c from Gracilaria tenuistipitata var. liui (Red alga).